A 37-amino-acid polypeptide reads, in one-letter code: Large ribosomal subunit protein bL36 (37 aa).

It belongs to the bacterial ribosomal protein bL36 family.

The chain is Large ribosomal subunit protein bL36 from Syntrophomonas wolfei subsp. wolfei (strain DSM 2245B / Goettingen).